The primary structure comprises 150 residues: Transcription antitermination protein NusB (150 aa).

The protein belongs to the NusB family.

Its function is as follows. Involved in transcription antitermination. Required for transcription of ribosomal RNA (rRNA) genes. Binds specifically to the boxA antiterminator sequence of the ribosomal RNA (rrn) operons. This Streptococcus pyogenes serotype M4 (strain MGAS10750) protein is Transcription antitermination protein NusB.